The following is a 2618-amino-acid chain: Mediator of RNA polymerase II transcription subunit 13 (2618 aa).

Composition is skewed to low complexity over residues 232 to 255 (FAAA…VPNP), 509 to 519 (TPASGTGSLSA), and 532 to 543 (DSKQLVQQQIQQ). Disordered stretches follow at residues 232-279 (FAAA…AAPP), 509-543 (TPAS…QIQQ), 569-731 (GNTP…SGGP), 916-957 (LNIK…AEGL), 970-995 (TSSN…NGGC), 1036-1055 (TKMF…SSPC), 1268-1384 (PRTP…TGVV), 1521-1557 (ASAS…ITGY), 1614-1633 (SRKN…LDKI), and 1985-2060 (KTLL…GETK). Residues T571 and T575 each carry the phosphothreonine modification. 3 stretches are compositionally biased toward polar residues: residues 581–590 (STYSRNSLGG), 634–643 (APTSVSNLQQ), and 669–681 (SITA…QTPS). Positions 692–706 (AGGGPAGGQGLGTGP) are enriched in gly residues. Residues 711 to 723 (AQQPATPTAATSA) are compositionally biased toward low complexity. Gly residues predominate over residues 939–949 (NSSGGGSGSGG). Positions 1272–1295 (LTPSTVPQPLSSGGSQYLLNQLNC) are enriched in polar residues. 2 stretches are compositionally biased toward gly residues: residues 1375-1384 (GLGGGATGVV) and 1528-1538 (AGSGHGHGPNG). Low complexity predominate over residues 1539 to 1553 (GSNSSSCTPPSSNPH). The segment covering 1614-1629 (SRKNQNKQGPGETSSA) has biased composition (polar residues). Residues 1993–2014 (GSGNSHSKGGSSCSSNSSSVSG) show a composition bias toward low complexity. S2472 and S2475 each carry phosphoserine.

It belongs to the Mediator complex subunit 13 family. As to quaternary structure, component of the Cdk8 module of the Mediator complex, composed of CycC, Cdk8, kto and skd.

Its subcellular location is the nucleus. Component of the Mediator complex, a coactivator involved in the regulated transcription of nearly all RNA polymerase II-dependent genes. Mediator functions as a bridge to convey information from gene-specific regulatory proteins to the basal RNA polymerase II transcription machinery. Mediator is recruited to promoters by direct interactions with regulatory proteins and serves as a scaffold for the assembly of a functional preinitiation complex with RNA polymerase II and the general transcription factors. Required for leg and eye development and macrochaete specification or differentiation. Negatively regulates sex comb development. Required for activated transcription of the MtnB and MtnD genes. The protein is Mediator of RNA polymerase II transcription subunit 13 (skd) of Drosophila melanogaster (Fruit fly).